The sequence spans 428 residues: AA14 family lytic polysaccharide monooxygenase A (428 aa).

Positions 1–21 (MLRSLPASLALVAAFASKASA) are cleaved as a signal peptide. 2 N-linked (GlcNAc...) asparagine glycosylation sites follow: Asn34 and Asn52. Cystine bridges form between Cys88–Cys112, Cys131–Cys158, Cys174–Cys179, Cys181–Cys203, and Cys223–Cys239. Asn155 carries N-linked (GlcNAc...) asparagine glycosylation. Disordered regions lie at residues 216-239 (KPAV…PGNC) and 292-428 (SSGT…HNAH). A compositionally biased stretch (basic and acidic residues) spans 223-232 (CGADPDHGKP). Residue Asn238 is glycosylated (N-linked (GlcNAc...) asparagine). Residues 292 to 379 (SSGTGSSPTS…SVATEASSSP (88 aa)) are compositionally biased toward low complexity. A compositionally biased stretch (polar residues) spans 380-402 (IASTTVDEAVVSSSTVGSINPTR). The span at 414 to 428 (QKKKRKHARHLHNAH) shows a compositional bias: basic residues.

Requires Cu(2+) as cofactor.

It localises to the secreted. Its function is as follows. Lytic polysaccharide monooxygenase (LPMO) showing oxidase and peroxidase activities that are common for LPMOs. Catalysis by LPMOs requires the reduction of the active-site copper from Cu(II) to Cu(I) by a reducing agent and H(2)O(2) or O(2) as a cosubstrate. Shows no activity on cellulose-associated xylan or any other tested polysaccharide substrate, meaning that the substrate rremains unknown. This Trametes coccinea (strain BRFM310) (Pycnoporus coccineus) protein is AA14 family lytic polysaccharide monooxygenase A.